The primary structure comprises 39 residues: Photosystem II reaction center protein I (39 aa).

The helical transmembrane segment at 6-26 threads the bilayer; it reads ISVYSVVFFFIGIFMFGFLAS.

Belongs to the PsbI family. In terms of assembly, PSII is composed of 1 copy each of membrane proteins PsbA, PsbB, PsbC, PsbD, PsbE, PsbF, PsbH, PsbI, PsbJ, PsbK, PsbL, PsbM, PsbT, PsbX, PsbY, PsbZ, Psb30/Ycf12, peripheral proteins PsbO, CyanoQ (PsbQ), PsbU, PsbV and a large number of cofactors. It forms dimeric complexes.

The protein resides in the cellular thylakoid membrane. Its function is as follows. One of the components of the core complex of photosystem II (PSII), required for its stability and/or assembly. PSII is a light-driven water:plastoquinone oxidoreductase that uses light energy to abstract electrons from H(2)O, generating O(2) and a proton gradient subsequently used for ATP formation. It consists of a core antenna complex that captures photons, and an electron transfer chain that converts photonic excitation into a charge separation. This chain is Photosystem II reaction center protein I, found in Synechococcus sp. (strain RCC307).